Here is a 103-residue protein sequence, read N- to C-terminus: MTGRGKGGKGLGKGGAKRHRKILRDNIQGITKPAIRRLARRGGVKRISAMIYEETRGVLKSFLESVIRDAVTYTEHAKRKTVTSLDVVYALKRQGRTLYGFGG.

Residues 1–14 (MTGRGKGGKGLGKG) are compositionally biased toward gly residues. Positions 1–20 (MTGRGKGGKGLGKGGAKRHR) are disordered. At Lys6 the chain carries N6-acetyl-N6-methyllysine; alternate. N6-methyllysine; alternate occurs at positions 6, 9, and 13. Lys13 carries the post-translational modification N6-acetyl-N6-methyllysine; alternate. Residues 17–21 (KRHRK) mediate DNA binding. N6-glutaryllysine is present on Lys92.

It belongs to the histone H4 family. The nucleosome is a histone octamer containing two molecules each of H2A, H2B, H3 and H4 assembled in one H3-H4 heterotetramer and two H2A-H2B heterodimers. The octamer wraps approximately 147 bp of DNA. In terms of processing, glutarylation at Lys-92 (H4K91glu) destabilizes nucleosomes by promoting dissociation of the H2A-H2B dimers from nucleosomes.

The protein localises to the nucleus. It localises to the chromosome. Its function is as follows. Core component of nucleosome. Nucleosomes wrap and compact DNA into chromatin, limiting DNA accessibility to the cellular machineries which require DNA as a template. Histones thereby play a central role in transcription regulation, DNA repair, DNA replication and chromosomal stability. DNA accessibility is regulated via a complex set of post-translational modifications of histones, also called histone code, and nucleosome remodeling. This Talaromyces funiculosus (Fruitlet core rot fungus) protein is Histone H4.2 (H4.2).